The sequence spans 316 residues: Aspartate carbamoyltransferase catalytic subunit (316 aa).

Carbamoyl phosphate is bound by residues R58 and T59. K86 contributes to the L-aspartate binding site. 3 residues coordinate carbamoyl phosphate: R108, H136, and Q139. Residues R169 and R223 each coordinate L-aspartate. 2 residues coordinate carbamoyl phosphate: G265 and P266.

This sequence belongs to the aspartate/ornithine carbamoyltransferase superfamily. ATCase family. As to quaternary structure, heterododecamer (2C3:3R2) of six catalytic PyrB chains organized as two trimers (C3), and six regulatory PyrI chains organized as three dimers (R2).

The enzyme catalyses carbamoyl phosphate + L-aspartate = N-carbamoyl-L-aspartate + phosphate + H(+). It participates in pyrimidine metabolism; UMP biosynthesis via de novo pathway; (S)-dihydroorotate from bicarbonate: step 2/3. In terms of biological role, catalyzes the condensation of carbamoyl phosphate and aspartate to form carbamoyl aspartate and inorganic phosphate, the committed step in the de novo pyrimidine nucleotide biosynthesis pathway. The sequence is that of Aspartate carbamoyltransferase catalytic subunit from Anaeromyxobacter sp. (strain Fw109-5).